Consider the following 336-residue polypeptide: F-box protein At5g50450 (336 aa).

Residues 19–70 form the F-box domain; that stretch reads NNHFEDLHDDLIISILRKLATSASSPSDFLTVLSTCKRLNRLGLHPLVLSKA. Positions 263, 266, 279, 282, 288, 292, 301, and 305 each coordinate Zn(2+). Residues 263 to 305 form an MYND-type; atypical zinc finger; sequence HGGCGRPETRAHEFRRCSVCGKVNYCSRGCQALDWRAKHKVEC.

The polypeptide is F-box protein At5g50450 (Arabidopsis thaliana (Mouse-ear cress)).